The primary structure comprises 374 residues: MNFKIDKTDGNARACTLQTAHSTIQTPIFMPVGTLGAVKSLDAIDLKEILDAKIILANTYHLYLRPTSKVVREFGGLHGFSKFDRSFLTDSGGFQAFSLSKISKPDENGIKFKSHIDGSMHYFTPKSVLDTQYDLSSDIMMILDDLVALPATKERIDLSIKRTINWAKIACEYHKSNKQKSVGIDQNIFGIIQGGTDYNARKLCAEALCEMEFDGLAIGGLSVGESNEEMYDTVEALMPFIDKNRPRYLMGVGTPEDLVQNVERGVDMFDCVMPTRNARNGTLFTSFGKINIKSAAFIKDDNKIDPECDCYTCSNFSRGYLNHLYKARELTFFRLASLHNLHYYLNLVKQMREAIMQGKFKEFKREFYAKRGMI.

The active-site Proton acceptor is the Asp-90. Substrate is bound by residues 90–94 (DSGGF), Asp-144, Gln-193, and Gly-220. The interval 251–257 (GVGTPED) is RNA binding. Asp-270 acts as the Nucleophile in catalysis. Positions 275 to 279 (TRNAR) are RNA binding; important for wobble base 34 recognition. 4 residues coordinate Zn(2+): Cys-308, Cys-310, Cys-313, and His-339.

It belongs to the queuine tRNA-ribosyltransferase family. Homodimer. Within each dimer, one monomer is responsible for RNA recognition and catalysis, while the other monomer binds to the replacement base PreQ1. Zn(2+) is required as a cofactor.

The enzyme catalyses 7-aminomethyl-7-carbaguanine + guanosine(34) in tRNA = 7-aminomethyl-7-carbaguanosine(34) in tRNA + guanine. It functions in the pathway tRNA modification; tRNA-queuosine biosynthesis. In terms of biological role, catalyzes the base-exchange of a guanine (G) residue with the queuine precursor 7-aminomethyl-7-deazaguanine (PreQ1) at position 34 (anticodon wobble position) in tRNAs with GU(N) anticodons (tRNA-Asp, -Asn, -His and -Tyr). Catalysis occurs through a double-displacement mechanism. The nucleophile active site attacks the C1' of nucleotide 34 to detach the guanine base from the RNA, forming a covalent enzyme-RNA intermediate. The proton acceptor active site deprotonates the incoming PreQ1, allowing a nucleophilic attack on the C1' of the ribose to form the product. After dissociation, two additional enzymatic reactions on the tRNA convert PreQ1 to queuine (Q), resulting in the hypermodified nucleoside queuosine (7-(((4,5-cis-dihydroxy-2-cyclopenten-1-yl)amino)methyl)-7-deazaguanosine). In Campylobacter fetus subsp. fetus (strain 82-40), this protein is Queuine tRNA-ribosyltransferase.